A 415-amino-acid polypeptide reads, in one-letter code: Tyrosine--tRNA ligase (415 aa).

Position 33 (Y33) interacts with L-tyrosine. Residues 38–47 carry the 'HIGH' region motif; sequence PSGESLHLGN. L-tyrosine-binding residues include Y161 and Q165. The 'KMSKS' region motif lies at 225–229; the sequence is KFGKS. ATP is bound at residue K228. An S4 RNA-binding domain is found at 350–414; that stretch reads MVIDFLLQAK…KKNYFIVVWK (65 aa).

This sequence belongs to the class-I aminoacyl-tRNA synthetase family. TyrS type 1 subfamily. As to quaternary structure, homodimer.

Its subcellular location is the cytoplasm. The catalysed reaction is tRNA(Tyr) + L-tyrosine + ATP = L-tyrosyl-tRNA(Tyr) + AMP + diphosphate + H(+). Its function is as follows. Catalyzes the attachment of tyrosine to tRNA(Tyr) in a two-step reaction: tyrosine is first activated by ATP to form Tyr-AMP and then transferred to the acceptor end of tRNA(Tyr). The protein is Tyrosine--tRNA ligase of Mycoplasmoides gallisepticum (strain R(low / passage 15 / clone 2)) (Mycoplasma gallisepticum).